An 859-amino-acid polypeptide reads, in one-letter code: Rod cGMP-specific 3',5'-cyclic phosphodiesterase subunit alpha (859 aa).

N-acetylglycine is present on glycine 2. GAF domains are found at residues 73–222 (QAEK…NLIM) and 254–431 (DIER…GWSV). Residues 483 to 816 (EEEELAEILQ…KEWKALADEY (334 aa)) form the PDEase domain. The active-site Proton donor is histidine 559. Residues histidine 563, histidine 599, aspartate 600, and aspartate 720 each coordinate a divalent metal cation. The tract at residues 821 to 859 (KGLEEEKQKQQAANQAAAGSQHGGKQPGGGPASKSCCVQ) is disordered. Over residues 830–840 (QQAANQAAAGS) the composition is skewed to low complexity. The segment covering 841–851 (QHGGKQPGGGP) has biased composition (gly residues). Cysteine 856 bears the Cysteine methyl ester mark. The S-farnesyl cysteine moiety is linked to residue cysteine 856. Positions 857-859 (CVQ) are cleaved as a propeptide — removed in mature form.

It belongs to the cyclic nucleotide phosphodiesterase family. In terms of assembly, oligomer composed of two catalytic chains (alpha and beta), an inhibitory chain (gamma) and the delta chain. Requires a divalent metal cation as cofactor.

Its subcellular location is the cell membrane. It is found in the cell projection. The protein localises to the cilium. The protein resides in the photoreceptor outer segment. The enzyme catalyses 3',5'-cyclic GMP + H2O = GMP + H(+). Its function is as follows. Rod-specific cGMP phosphodiesterase that catalyzes the hydrolysis of 3',5'-cyclic GMP. This protein participates in processes of transmission and amplification of the visual signal. This is Rod cGMP-specific 3',5'-cyclic phosphodiesterase subunit alpha from Bos taurus (Bovine).